A 218-amino-acid chain; its full sequence is Glutathione S-transferase Mu 7 (218 aa).

The GST N-terminal domain occupies 1 to 88 (MPMTLGYWDI…YLGRKHNLCG (88 aa)). Glutathione contacts are provided by residues 7–8 (YW), 46–50 (WLNEK), 59–60 (NL), and 72–73 (QS). One can recognise a GST C-terminal domain in the interval 90–208 (TEEERIRVDI…KTSRFLPRPM (119 aa)). Position 116 (Tyr116) interacts with substrate.

The protein belongs to the GST superfamily. Mu family. Homodimer.

The protein localises to the cytoplasm. The catalysed reaction is RX + glutathione = an S-substituted glutathione + a halide anion + H(+). In terms of biological role, conjugation of reduced glutathione to a wide number of exogenous and endogenous hydrophobic electrophiles. The chain is Glutathione S-transferase Mu 7 (Gstm7) from Mus musculus (Mouse).